A 161-amino-acid polypeptide reads, in one-letter code: Nucleotide-binding protein azo2183 (161 aa).

Belongs to the YajQ family.

In terms of biological role, nucleotide-binding protein. The protein is Nucleotide-binding protein azo2183 of Azoarcus sp. (strain BH72).